A 110-amino-acid chain; its full sequence is Nitrogenase-stabilizing/protective protein NifW (110 aa).

It belongs to the NifW family. In terms of assembly, homotrimer; associates with NifD.

Its function is as follows. May protect the nitrogenase Fe-Mo protein from oxidative damage. The protein is Nitrogenase-stabilizing/protective protein NifW of Acidithiobacillus ferrooxidans (strain ATCC 23270 / DSM 14882 / CIP 104768 / NCIMB 8455) (Ferrobacillus ferrooxidans (strain ATCC 23270)).